The chain runs to 783 residues: Transcription factor Sp3 (783 aa).

Positions M1–E12 are enriched in basic and acidic residues. The interval M1 to P55 is disordered. A compositionally biased stretch (gly residues) spans D19–G28. The segment covering E29 to Q51 has biased composition (low complexity). S72 carries the post-translational modification Phosphoserine. Residue K122 forms a Glycyl lysine isopeptide (Lys-Gly) (interchain with G-Cter in SUMO) linkage. The tract at residues Q140–Q239 is transactivation domain (Gln-rich). A disordered region spans residues G302 to Q340. The span at N310 to S319 shows a compositional bias: basic and acidic residues. Residues V322–Q340 are compositionally biased toward polar residues. The tract at residues Q352–Q501 is transactivation domain (Gln-rich). The 9aaTAD motif lies at I463 to Q471. The segment at I536 to Q622 is repressor domain. The residue at position 553 (K553) is an N6-acetyllysine; alternate. A Glycyl lysine isopeptide (Lys-Gly) (interchain with G-Cter in SUMO); alternate cross-link involves residue K553. Residue K553 forms a Glycyl lysine isopeptide (Lys-Gly) (interchain with G-Cter in SUMO1); alternate linkage. K553 is covalently cross-linked (Glycyl lysine isopeptide (Lys-Gly) (interchain with G-Cter in SUMO2); alternate). Residues S565 and S568 each carry the phosphoserine modification. K595 participates in a covalent cross-link: Glycyl lysine isopeptide (Lys-Gly) (interchain with G-Cter in SUMO2). A C2H2-type 1 zinc finger spans residues H623–H647. Phosphoserine is present on S648. 2 C2H2-type zinc fingers span residues F653–H677 and F683–H705.

The protein belongs to the Sp1 C2H2-type zinc-finger protein family. In terms of assembly, interacts with HLTF; the interaction may be required for basal transcriptional activity of HLTF. Interacts with HDAC1; the interaction deacetylates SP3 and regulates its transcriptional activity. Interacts with HDAC2 (preferably the CK2-phosphorylated form); the interaction deacetylates SP3 and regulates its transcriptional activity. Ceramides can also regulate acetylation/deacetylation events through altering the interaction of HDAC with SP3. Interacts with MEIS2 isoform Meis2D and PBX1 isoform PBX1a. Acetylated by histone acetyltransferase p300, deacetylated by HDACs. Acetylation/deacetylation states regulate transcriptional activity. Acetylation appears to activate transcription. Alternate sumoylation and acetylation at Lys-553 also control transcriptional activity. Post-translationally, sumoylated on all isoforms. Sumoylated on 2 sites in longer isoforms with Lys-553 being the major site. Sumoylation at this site promotes nuclear localization to the nuclear periphery, nuclear dots and PML nuclear bodies. Sumoylation on Lys-553 represses the transactivation activity, except for the largest isoform which has little effect on transactivation. Alternate sumoylation and acetylation at Lys-553 also control transcriptional activity.

It localises to the nucleus. The protein localises to the PML body. Functionally, transcriptional factor that can act as an activator or repressor depending on isoform and/or post-translational modifications. Binds to GT and GC boxes promoter elements. Competes with SP1 for the GC-box promoters. Weak activator of transcription but can activate a number of genes involved in different processes such as cell-cycle regulation, hormone-induction and house-keeping. This chain is Transcription factor Sp3 (Sp3), found in Mus musculus (Mouse).